The sequence spans 863 residues: Leucine--tRNA ligase (863 aa).

A 'HIGH' region motif is present at residues 40–51; the sequence is PYPSGAGLHVGH. The 'KMSKS' region motif lies at 635 to 639; the sequence is KMSKS. Position 638 (Lys-638) interacts with ATP.

It belongs to the class-I aminoacyl-tRNA synthetase family.

The protein resides in the cytoplasm. It catalyses the reaction tRNA(Leu) + L-leucine + ATP = L-leucyl-tRNA(Leu) + AMP + diphosphate. The polypeptide is Leucine--tRNA ligase (Leptospira interrogans serogroup Icterohaemorrhagiae serovar copenhageni (strain Fiocruz L1-130)).